The chain runs to 160 residues: Snaclec subunit A (160 aa).

The signal sequence occupies residues Met1–Ala23. Cystine bridges form between Cys25/Cys36, Cys53/Cys150, and Cys125/Cys142. One can recognise a C-type lectin domain in the interval Tyr32–Lys151.

The protein belongs to the snaclec family. In terms of assembly, heterodimer of subunits A and B; disulfide-linked. Expressed by the venom gland.

The protein resides in the secreted. Functionally, interferes with one step of hemostasis (modulation of platelet aggregation, or coagulation cascade, for example). This Philodryas olfersii (Green snake) protein is Snaclec subunit A.